We begin with the raw amino-acid sequence, 475 residues long: tRNA-2-methylthio-N(6)-dimethylallyladenosine synthase (475 aa).

The segment covering Met-1–Gly-10 has biased composition (basic and acidic residues). The interval Met-1–Thr-22 is disordered. The 118-residue stretch at Gly-27–Ala-144 folds into the MTTase N-terminal domain. Positions 36, 73, 107, 181, 185, and 188 each coordinate [4Fe-4S] cluster. Residues Arg-167–Ala-400 enclose the Radical SAM core domain. A TRAM domain is found at Gln-403–Gly-466.

It belongs to the methylthiotransferase family. MiaB subfamily. Monomer. [4Fe-4S] cluster is required as a cofactor.

The protein resides in the cytoplasm. The catalysed reaction is N(6)-dimethylallyladenosine(37) in tRNA + (sulfur carrier)-SH + AH2 + 2 S-adenosyl-L-methionine = 2-methylsulfanyl-N(6)-dimethylallyladenosine(37) in tRNA + (sulfur carrier)-H + 5'-deoxyadenosine + L-methionine + A + S-adenosyl-L-homocysteine + 2 H(+). Its function is as follows. Catalyzes the methylthiolation of N6-(dimethylallyl)adenosine (i(6)A), leading to the formation of 2-methylthio-N6-(dimethylallyl)adenosine (ms(2)i(6)A) at position 37 in tRNAs that read codons beginning with uridine. The chain is tRNA-2-methylthio-N(6)-dimethylallyladenosine synthase from Bordetella bronchiseptica (strain ATCC BAA-588 / NCTC 13252 / RB50) (Alcaligenes bronchisepticus).